The following is a 949-amino-acid chain: Translation initiation factor IF-2 (949 aa).

Disordered regions lie at residues 50 to 206 and 220 to 359; these read FTEK…GAAR and QNAE…TERK. 2 stretches are compositionally biased toward basic and acidic residues: residues 52-84 and 104-143; these read EKPK…KVEK and FKAE…DQGS. 2 stretches are compositionally biased toward polar residues: residues 144–154 and 164–180; these read KNRNFNKSQGQ and GSQQ…SNKP. The segment covering 187 to 206 has biased composition (low complexity); the sequence is NAANRNQNNSQQERQVGAAR. Residues 224–275 are compositionally biased toward basic and acidic residues; sequence YMRHKETQLREQEEARRLAERAKEEARLAAQKAAEEKAKEAEKAAKTERFEP. The span at 319 to 336 shows a compositional bias: low complexity; that stretch reads KSWNNQNQVRNQRNSNWN. Residues 450–619 enclose the tr-type G domain; that stretch reads ERAPVVTIMG…LLVAEVEELK (170 aa). Residues 459–466 are G1; sequence GHVDHGKT. 459–466 provides a ligand contact to GTP; sequence GHVDHGKT. The interval 484 to 488 is G2; that stretch reads GITQH. The G3 stretch occupies residues 505-508; sequence DTPG. GTP is bound by residues 505-509 and 559-562; these read DTPGH and NKID. The G4 stretch occupies residues 559–562; the sequence is NKID. Residues 595-597 are G5; the sequence is SAK.

This sequence belongs to the TRAFAC class translation factor GTPase superfamily. Classic translation factor GTPase family. IF-2 subfamily.

The protein resides in the cytoplasm. One of the essential components for the initiation of protein synthesis. Protects formylmethionyl-tRNA from spontaneous hydrolysis and promotes its binding to the 30S ribosomal subunits. Also involved in the hydrolysis of GTP during the formation of the 70S ribosomal complex. The polypeptide is Translation initiation factor IF-2 (Streptococcus uberis (strain ATCC BAA-854 / 0140J)).